The primary structure comprises 312 residues: Protoheme IX farnesyltransferase (312 aa).

The next 9 membrane-spanning stretches (helical) occupy residues 29 to 49, 50 to 70, 90 to 110, 117 to 137, 150 to 170, 177 to 197, 223 to 243, 246 to 266, and 292 to 312; these read VMSL…GHMN, PVLA…SGAL, IPAG…LSAF, LMVN…YAVI, IVIG…AATG, LVLF…LSLF, ALFY…MGFA, FYGV…WRLW, and IFAV…FGVF.

It belongs to the UbiA prenyltransferase family. Protoheme IX farnesyltransferase subfamily.

The protein resides in the cell inner membrane. The enzyme catalyses heme b + (2E,6E)-farnesyl diphosphate + H2O = Fe(II)-heme o + diphosphate. Its pathway is porphyrin-containing compound metabolism; heme O biosynthesis; heme O from protoheme: step 1/1. Converts heme B (protoheme IX) to heme O by substitution of the vinyl group on carbon 2 of heme B porphyrin ring with a hydroxyethyl farnesyl side group. This chain is Protoheme IX farnesyltransferase, found in Brucella melitensis biotype 1 (strain ATCC 23456 / CCUG 17765 / NCTC 10094 / 16M).